A 283-amino-acid polypeptide reads, in one-letter code: 5'-nucleotidase SurE (283 aa).

A divalent metal cation contacts are provided by Asp14, Asp15, Ser47, and Asn105.

Belongs to the SurE nucleotidase family. Requires a divalent metal cation as cofactor.

Its subcellular location is the cytoplasm. The catalysed reaction is a ribonucleoside 5'-phosphate + H2O = a ribonucleoside + phosphate. Nucleotidase that shows phosphatase activity on nucleoside 5'-monophosphates. The chain is 5'-nucleotidase SurE from Chlamydia trachomatis serovar A (strain ATCC VR-571B / DSM 19440 / HAR-13).